The primary structure comprises 68 residues: Antimicrobial peptide Eval418 (68 aa).

Positions 1-23 (MRTQLAVLLVALVLLQMIAQSEA) are cleaved as a signal peptide. Isoleucine 36 is subject to Isoleucine amide. A propeptide spanning residues 37 to 68 (GKRGLRNLDDLDDVFDDDLSAADLEFLKQLMR) is cleaved from the precursor.

Belongs to the non-disulfide-bridged peptide (NDBP) superfamily. Short antimicrobial peptide (group 4) family. In terms of tissue distribution, expressed by the venom gland.

Its subcellular location is the secreted. Probable antimicrobial peptide. Shows dose-dependent and time-dependent inactivation of herpes simplex virus type 1 (HSV-1) and dose-dependent inhibition of HSV-1 viral attachment to host cells. Scarcely suppress an established HSV-1 infection due to poor cellular uptake. The protein is Antimicrobial peptide Eval418 of Euscorpiops validus (Scorpion).